A 534-amino-acid chain; its full sequence is EH domain-containing protein 1 (534 aa).

An N-acetylmethionine modification is found at methionine 1. Residues 55 to 286 (FDNKPMVLLV…DLFKDIQSLP (232 aa)) enclose the Dynamin-type G domain. The tract at residues 65–72 (GQYSTGKT) is G1 motif. 65–72 (GQYSTGKT) contributes to the ATP binding site. The interval 91–92 (EP) is G2 motif. The segment at 153–156 (DTPG) is G3 motif. A coiled-coil region spans residues 198–227 (DEFSEVIKALKNHEDKIRVVLNKADQIETQ). The G4 motif stretch occupies residues 219–222 (NKAD). Residue lysine 220 coordinates ATP. Position 243 (isoleucine 243) is a region of interest, G5 motif. Residue tryptophan 258 participates in ATP binding. In terms of domain architecture, EH spans 444-532 (DKPTYDEIFY…PHLVPPSKRR (89 aa)). At serine 456 the chain carries Phosphoserine. Residues 476-511 (LPNTVLGKIWKLADVDRDGLLDDEEFALANHLIKVK) enclose the EF-hand domain. Ca(2+)-binding residues include aspartate 489, aspartate 491, aspartate 493, and glutamate 500.

This sequence belongs to the TRAFAC class dynamin-like GTPase superfamily. Dynamin/Fzo/YdjA family. EHD subfamily. In terms of assembly, homooligomer, and heterooligomer with EHD2, EHD3 and EHD4, ATP-binding is required for heterooligomerization. Interacts (via EH domain) with MICALL1 (via NPF1 motif); the interaction is direct and recruits EHD1 to membranes. Interacts with RAB35; the interaction is indirect through MICALL1 and recruits EHD1 to membranes. Interacts (via EH domain) with PACSIN2 (via NPF motifs); regulates localization to tubular recycling endosome membranes. Interacts with PACSIN1. Interacts with RAB8A. Interacts with FER1L5 (via second C2 domain). Interacts with MYOF. Interacts with ZFYVE20. Interacts (via EH domain) with RAB11FIP2.

It localises to the recycling endosome membrane. The protein resides in the early endosome membrane. It is found in the cell membrane. Its subcellular location is the cell projection. The protein localises to the cilium membrane. In terms of biological role, ATP- and membrane-binding protein that controls membrane reorganization/tubulation upon ATP hydrolysis. Acts in early endocytic membrane fusion and membrane trafficking of recycling endosomes. Recruited to endosomal membranes upon nerve growth factor stimulation, indirectly regulates neurite outgrowth. Plays a role in myoblast fusion. Involved in the unidirectional retrograde dendritic transport of endocytosed BACE1 and in efficient sorting of BACE1 to axons implicating a function in neuronal APP processing. Plays a role in the formation of the ciliary vesicle (CV), an early step in cilium biogenesis. Proposed to be required for the fusion of distal appendage vesicles (DAVs) to form the CV by recruiting SNARE complex component SNAP29. Is required for recruitment of transition zone proteins CEP290, RPGRIP1L, TMEM67 and B9D2, and of IFT20 following DAV reorganization before Rab8-dependent ciliary membrane extension. Required for the loss of CCP110 form the mother centriole essential for the maturation of the basal body during ciliogenesis. The sequence is that of EH domain-containing protein 1 from Bos taurus (Bovine).